The following is a 181-amino-acid chain: Large ribosomal subunit protein uL6 (181 aa).

It belongs to the universal ribosomal protein uL6 family. Part of the 50S ribosomal subunit.

This protein binds to the 23S rRNA, and is important in its secondary structure. It is located near the subunit interface in the base of the L7/L12 stalk, and near the tRNA binding site of the peptidyltransferase center. The polypeptide is Large ribosomal subunit protein uL6 (Vesicomyosocius okutanii subsp. Calyptogena okutanii (strain HA)).